The following is a 491-amino-acid chain: Glutamyl-tRNA(Gln) amidotransferase subunit A (491 aa).

Residues lysine 77 and serine 152 each act as charge relay system in the active site. Serine 176 (acyl-ester intermediate) is an active-site residue.

Belongs to the amidase family. GatA subfamily. As to quaternary structure, heterotrimer of A, B and C subunits.

The catalysed reaction is L-glutamyl-tRNA(Gln) + L-glutamine + ATP + H2O = L-glutaminyl-tRNA(Gln) + L-glutamate + ADP + phosphate + H(+). Functionally, allows the formation of correctly charged Gln-tRNA(Gln) through the transamidation of misacylated Glu-tRNA(Gln) in organisms which lack glutaminyl-tRNA synthetase. The reaction takes place in the presence of glutamine and ATP through an activated gamma-phospho-Glu-tRNA(Gln). The sequence is that of Glutamyl-tRNA(Gln) amidotransferase subunit A from Chlamydia trachomatis serovar A (strain ATCC VR-571B / DSM 19440 / HAR-13).